Here is a 302-residue protein sequence, read N- to C-terminus: F-box protein At1g20360 (302 aa).

Residues 1-48 (MNSLPLHLLDQILFRLEPKSLAMMKSTNRTINSHISDPLFESEYFSRL) form the F-box domain.

This is F-box protein At1g20360 from Arabidopsis thaliana (Mouse-ear cress).